The following is a 590-amino-acid chain: Aspartate--tRNA ligase (590 aa).

L-aspartate is bound at residue E175. The aspartate stretch occupies residues 199–202 (QIFK). L-aspartate is bound at residue R221. ATP-binding positions include 221–223 (RDE) and Q230. H449 serves as a coordination point for L-aspartate. E483 contributes to the ATP binding site. R490 serves as a coordination point for L-aspartate. An ATP-binding site is contributed by 535 to 538 (GLDR).

It belongs to the class-II aminoacyl-tRNA synthetase family. Type 1 subfamily. Homodimer.

It is found in the cytoplasm. It carries out the reaction tRNA(Asp) + L-aspartate + ATP = L-aspartyl-tRNA(Asp) + AMP + diphosphate. In terms of biological role, catalyzes the attachment of L-aspartate to tRNA(Asp) in a two-step reaction: L-aspartate is first activated by ATP to form Asp-AMP and then transferred to the acceptor end of tRNA(Asp). The polypeptide is Aspartate--tRNA ligase (Geobacillus kaustophilus (strain HTA426)).